The sequence spans 566 residues: CTP synthase (566 aa).

The tract at residues 1 to 270 (MTKFVFVTGG…DGLICDKLRL (270 aa)) is amidoligase domain. Ser-13 contacts CTP. Ser-13 lines the UTP pocket. Residues 14-19 (SLGKGI) and Asp-71 contribute to the ATP site. Mg(2+) contacts are provided by Asp-71 and Glu-144. Residues 151–153 (DIE), 191–196 (KTKPTQ), and Lys-227 contribute to the CTP site. UTP-binding positions include 191-196 (KTKPTQ) and Lys-227. The 253-residue stretch at 295-547 (SIAMVGKYVD…IAATLEQRSA (253 aa)) folds into the Glutamine amidotransferase type-1 domain. Gly-356 lines the L-glutamine pocket. The Nucleophile; for glutamine hydrolysis role is filled by Cys-383. L-glutamine-binding positions include 384–387 (LGMQ), Glu-407, and Arg-473. Residues His-520 and Glu-522 contribute to the active site.

Belongs to the CTP synthase family. In terms of assembly, homotetramer.

It catalyses the reaction UTP + L-glutamine + ATP + H2O = CTP + L-glutamate + ADP + phosphate + 2 H(+). It carries out the reaction L-glutamine + H2O = L-glutamate + NH4(+). The catalysed reaction is UTP + NH4(+) + ATP = CTP + ADP + phosphate + 2 H(+). It participates in pyrimidine metabolism; CTP biosynthesis via de novo pathway; CTP from UDP: step 2/2. With respect to regulation, allosterically activated by GTP, when glutamine is the substrate; GTP has no effect on the reaction when ammonia is the substrate. The allosteric effector GTP functions by stabilizing the protein conformation that binds the tetrahedral intermediate(s) formed during glutamine hydrolysis. Inhibited by the product CTP, via allosteric rather than competitive inhibition. Functionally, catalyzes the ATP-dependent amination of UTP to CTP with either L-glutamine or ammonia as the source of nitrogen. Regulates intracellular CTP levels through interactions with the four ribonucleotide triphosphates. In Polaromonas naphthalenivorans (strain CJ2), this protein is CTP synthase.